The sequence spans 267 residues: Alpha-tubulin N-acetyltransferase (267 aa).

Residues 1-197 (MDFRAGLENV…NNFVVYSEFF (197 aa)) enclose the N-acetyltransferase domain. Residues 131 to 144 (FYIH…GYGK) and 167 to 176 (SMKMIQFLHK) contribute to the acetyl-CoA site.

The protein belongs to the acetyltransferase ATAT1 family.

The enzyme catalyses L-lysyl-[alpha-tubulin] + acetyl-CoA = N(6)-acetyl-L-lysyl-[alpha-tubulin] + CoA + H(+). Its function is as follows. Specifically acetylates 'Lys-40' in alpha-tubulin on the lumenal side of microtubules. Promotes microtubule destabilization and accelerates microtubule dynamics; this activity may be independent of acetylation activity. Acetylates alpha-tubulin with a slow enzymatic rate, due to a catalytic site that is not optimized for acetyl transfer. Enters the microtubule through each end and diffuses quickly throughout the lumen of microtubules. Acetylates only long/old microtubules because of its slow acetylation rate since it does not have time to act on dynamically unstable microtubules before the enzyme is released. The sequence is that of Alpha-tubulin N-acetyltransferase from Schistosoma japonicum (Blood fluke).